The primary structure comprises 405 residues: Tryptophan synthase beta chain (405 aa).

An N6-(pyridoxal phosphate)lysine modification is found at Lys95.

This sequence belongs to the TrpB family. Tetramer of two alpha and two beta chains. It depends on pyridoxal 5'-phosphate as a cofactor.

The enzyme catalyses (1S,2R)-1-C-(indol-3-yl)glycerol 3-phosphate + L-serine = D-glyceraldehyde 3-phosphate + L-tryptophan + H2O. It functions in the pathway amino-acid biosynthesis; L-tryptophan biosynthesis; L-tryptophan from chorismate: step 5/5. The beta subunit is responsible for the synthesis of L-tryptophan from indole and L-serine. The protein is Tryptophan synthase beta chain of Pseudomonas entomophila (strain L48).